Consider the following 226-residue polypeptide: uncharacterized protein (226 aa).

Residues 75–226 (YTIRNVTKDD…KGWLRMVKRI (152 aa)) form the N-acetyltransferase domain.

This sequence belongs to the acetyltransferase family.

This is an uncharacterized protein from Methanocaldococcus jannaschii (strain ATCC 43067 / DSM 2661 / JAL-1 / JCM 10045 / NBRC 100440) (Methanococcus jannaschii).